A 323-amino-acid polypeptide reads, in one-letter code: Acetyl-coenzyme A carboxylase carboxyl transferase subunit alpha (323 aa).

The CoA carboxyltransferase C-terminal domain maps to 39 to 293 (RLSKKSQQLT…RRALADSLRQ (255 aa)).

The protein belongs to the AccA family. As to quaternary structure, acetyl-CoA carboxylase is a heterohexamer composed of biotin carboxyl carrier protein (AccB), biotin carboxylase (AccC) and two subunits each of ACCase subunit alpha (AccA) and ACCase subunit beta (AccD).

Its subcellular location is the cytoplasm. It carries out the reaction N(6)-carboxybiotinyl-L-lysyl-[protein] + acetyl-CoA = N(6)-biotinyl-L-lysyl-[protein] + malonyl-CoA. Its pathway is lipid metabolism; malonyl-CoA biosynthesis; malonyl-CoA from acetyl-CoA: step 1/1. Its function is as follows. Component of the acetyl coenzyme A carboxylase (ACC) complex. First, biotin carboxylase catalyzes the carboxylation of biotin on its carrier protein (BCCP) and then the CO(2) group is transferred by the carboxyltransferase to acetyl-CoA to form malonyl-CoA. The sequence is that of Acetyl-coenzyme A carboxylase carboxyl transferase subunit alpha from Paraburkholderia phytofirmans (strain DSM 17436 / LMG 22146 / PsJN) (Burkholderia phytofirmans).